The following is an 824-amino-acid chain: RelA-associated inhibitor (824 aa).

Methionine 1 bears the N-acetylmethionine mark. 2 disordered regions span residues 48–87 and 99–271; these read SLWS…SPQK and RSES…YERL. Serine 84, serine 100, serine 102, serine 110, serine 113, serine 119, and serine 120 each carry phosphoserine. A Phosphothreonine modification is found at threonine 123. Position 134 is a phosphoserine (serine 134). An omega-N-methylarginine mark is found at arginine 137, arginine 142, arginine 144, arginine 160, arginine 167, and arginine 180. Serine 183, serine 187, and serine 203 each carry phosphoserine. Arginine 205 bears the Omega-N-methylarginine mark. Residue threonine 275 is modified to Phosphothreonine. A Phosphoserine modification is found at serine 279. 2 disordered regions span residues 291-370 and 388-501; these read SLDG…RPIP and RAVL…QTVP. Phosphothreonine is present on threonine 307. 3 positions are modified to phosphoserine: serine 315, serine 331, and serine 338. Phosphothreonine is present on threonine 340. Residues 359-370 show a composition bias toward low complexity; the sequence is QPRSTPRQRPIP. The segment covering 400-424 has biased composition (pro residues); that stretch reads APPPKLPPQPPPQPQMQPQPQPQPQ. The span at 425–440 shows a compositional bias: low complexity; sequence MQPQSQAQPQTPAPQQ. Phosphoserine is present on residues serine 522, serine 563, and serine 593. The disordered stretch occupies residues 547-614; it reads FHRHGGPGPG…SVLRKVGSPR (68 aa). The span at 575–597 shows a compositional bias: pro residues; the sequence is PPAPAPPAPIPPPAPPQSSPPEQ. ANK repeat units follow at residues 655 to 684 and 688 to 717; these read EGIT…NVNS and HGWT…AIFA. Residues 754–816 form the SH3 domain; it reads MHNGVVYALW…PRNYFGLFPR (63 aa).

This sequence belongs to the iASPP family. Interacts with TP63 and TP73. Interacts with RELA NF-kappa-B subunit and with SP1 via its C-terminal part. Interacts (via SH3 domain and ANK repeats) with p53/TP53; the interaction inhibits pro-apoptotic activity of p53/TP53. Most abundant in skin with high levels also found in heart, testis and stomach. In 15.5 dpc embryonic heart, expressed at higher levels in atria than ventricles.

The protein resides in the cytoplasm. Its subcellular location is the nucleus. Its function is as follows. Regulator that plays a central role in regulation of apoptosis and transcription via its interaction with NF-kappa-B and p53/TP53 proteins. Inhibits p53/TP53 function, possibly by preventing the association between p53/TP53 and ASPP1 or ASPP2, and therefore suppressing the subsequent activation of apoptosis. Is involved in NF-kappa-B dependent negative regulation of inflammatory response. The chain is RelA-associated inhibitor from Mus musculus (Mouse).